Here is a 96-residue protein sequence, read N- to C-terminus: Putative septation protein SpoVG (96 aa).

The protein belongs to the SpoVG family.

Functionally, could be involved in septation. The polypeptide is Putative septation protein SpoVG (Phytoplasma australiense).